The chain runs to 235 residues: MAAPAPSLWTLLLLLLLLPPPPGAHGELCRPFGEDNSIPVFCPDFCCGSCSNQYCCSDVLRKIQWNEEMCPEPESRFSTPAEETPEHLGSALKFRSSFDSDPMSGFGATVAIGVTIFVVFIATIIICFTCSCCCLYKMCCPQRPVVTNTTTTTVVHAPYPQPQPQPVAPSYPGPTYQGYHPMPPQPGMPAAPYPTQYPPPYLAQPTGPPPYHESLAGASQPPYNPTYMDSLKTIP.

Residues 1–26 (MAAPAPSLWTLLLLLLLLPPPPGAHG) form the signal peptide. Topologically, residues 27–105 (ELCRPFGEDN…SSFDSDPMSG (79 aa)) are extracellular. Residues 106-126 (FGATVAIGVTIFVVFIATIII) form a helical membrane-spanning segment. At 127-235 (CFTCSCCCLY…TYMDSLKTIP (109 aa)) the chain is on the cytoplasmic side. Residues 157-235 (APYPQPQPQP…TYMDSLKTIP (79 aa)) form a disordered region. Pro residues-rich tracts occupy residues 159–172 (YPQPQPQPVAPSYP) and 181–211 (PMPPQPGMPAAPYPTQYPPPYLAQPTGPPPY).

This sequence belongs to the shisa family. In terms of assembly, interacts with PDCD6; PDCD6 can stabilize SHISA5. As to expression, spleen and thymus.

The protein localises to the endoplasmic reticulum membrane. It is found in the nucleus membrane. Can induce apoptosis in a caspase-dependent manner and plays a role in p53/TP53-dependent apoptosis. The protein is Protein shisa-5 (Shisa5) of Mus musculus (Mouse).